A 261-amino-acid polypeptide reads, in one-letter code: Acidic leucine-rich nuclear phosphoprotein 32 family member B (261 aa).

4 LRR repeats span residues 16–40 (PAAV…LTAE), 43–64 (NLEF…PKLP), 65–87 (KLKK…AEKL), and 89–110 (NLTH…EPLK). At lysine 86 the chain carries N6-acetyllysine. In terms of domain architecture, LRRCT spans 123 to 161 (CEVTNLNDYRESVFKLLPQLTYLDGYDREDREAPDSDAE). Positions 149 to 261 (DREDREAPDS…RETDDEGEDD (113 aa)) are disordered. The segment covering 157 to 243 (DSDAEVDGVD…DEDEDEEEEE (87 aa)) has biased composition (acidic residues). A Phosphoserine modification is found at serine 158. A compositionally biased stretch (basic and acidic residues) spans 244–254 (SGKGEGRKRET). Threonine 254 bears the Phosphothreonine mark.

This sequence belongs to the ANP32 family. As to quaternary structure, monomer. Interacts with histones H3 and H4. Some glutamate residues are glycylated by TTLL8. This modification occurs exclusively on glutamate residues and results in a glycine chain on the gamma-carboxyl group.

Its subcellular location is the nucleus. Functionally, multifunctional protein working as a cell cycle progression factor as well as a cell survival factor. Required for the progression from the G1 to the S phase. Anti-apoptotic protein which functions as a caspase-3 inhibitor. Has no phosphatase 2A (PP2A) inhibitor activity. Exhibits histone chaperone properties, stimulating core histones to assemble into a nucleosome. In Ovis aries (Sheep), this protein is Acidic leucine-rich nuclear phosphoprotein 32 family member B (ANP32B).